The chain runs to 411 residues: Prostaglandin E2 receptor EP3 subtype (411 aa).

Residues 1–49 lie on the Extracellular side of the membrane; sequence MKETRGDGGSAPFCTRLNHSYPGMWAPEARGNLTRPPGPGEDCGSVSVA. Residues N18 and N32 are each glycosylated (N-linked (GlcNAc...) asparagine). A helical membrane pass occupies residues 50 to 74; the sequence is FPITMLITGFVGNALAMLLVSRSYR. Residues 75-87 are Cytoplasmic-facing; it reads RRESKRKKSFLLC. Residues 88–108 traverse the membrane as a helical segment; sequence IGWLALTDLVGQLLTSPVVIL. The Extracellular portion of the chain corresponds to 109 to 127; that stretch reads VYLSKQRWEQLDPSGRLCT. C126 and C204 form a disulfide bridge. Residues 128 to 149 form a helical membrane-spanning segment; that stretch reads FFGLTMTVFGLSSLFIASAMAV. Over 150–171 the chain is Cytoplasmic; that stretch reads ERALAIRAPHWYASHMKTRATR. A helical transmembrane segment spans residues 172 to 193; sequence AVLLGVWLAVLAFALLPVLGVG. Over 194–223 the chain is Extracellular; that stretch reads QYTIQWPGTWCFISTGRGDNGTSSSHNWGN. An N-linked (GlcNAc...) asparagine glycan is attached at N213. Residues 224–249 form a helical membrane-spanning segment; the sequence is LFFASTFAFLGLLALAITFTCNLATI. The Cytoplasmic segment spans residues 250–279; that stretch reads KALVSRCRAKAAASQSSAQWGRITTETAIQ. Residues 280–303 traverse the membrane as a helical segment; that stretch reads LMGIMCVLSVCWSPLLIMMLKMIF. Residues 304 to 323 are Extracellular-facing; the sequence is NQTSVEHCKTDTGKQKECNF. A helical transmembrane segment spans residues 324–345; it reads FLIAVRLASLNQILDPWVYLLL. The Cytoplasmic portion of the chain corresponds to 346 to 411; sequence RKILLRKFCQ…ADPGARPYQQ (66 aa). The span at 367-390 shows a compositional bias: basic and acidic residues; it reads IQRENRNVSHSGQHEEARDSEKSK. Residues 367–392 form a disordered region; sequence IQRENRNVSHSGQHEEARDSEKSKTI.

The protein belongs to the G-protein coupled receptor 1 family. As to quaternary structure, interacts (via C-terminus) with MKLN1. In the kidney cortex and medulla, adrenal gland and stomach. In kidney, expression is higher in tubules in the outer medulla, with lower levels in cortex. In kidney cortex, expression is restricted to distal tubules.

It localises to the cell membrane. Receptor for prostaglandin E2 (PGE2). Required for normal development of fever in response to pyrinogens, including IL1B, prostaglandin E2 and bacterial lipopolysaccharide (LPS). Required for normal potentiation of platelet aggregation by prostaglandin E2, and thus plays a role in the regulation of blood coagulation. Required for increased HCO3(-) secretion in the duodenum in response to mucosal acidification, and thereby contributes to the protection of the mucosa against acid-induced ulceration. Not required for normal kidney function, normal urine volume and osmolality. The polypeptide is Prostaglandin E2 receptor EP3 subtype (PTGER3) (Oryctolagus cuniculus (Rabbit)).